Consider the following 252-residue polypeptide: 3-dehydroquinate dehydratase (252 aa).

3-dehydroquinate contacts are provided by residues Ser21, 46–48 (EWR), and Arg82. Residue His143 is the Proton donor/acceptor of the active site. The active-site Schiff-base intermediate with substrate is Lys170. Residues Arg213, Ser232, and Gln236 each coordinate 3-dehydroquinate.

It belongs to the type-I 3-dehydroquinase family. In terms of assembly, homodimer.

It carries out the reaction 3-dehydroquinate = 3-dehydroshikimate + H2O. It participates in metabolic intermediate biosynthesis; chorismate biosynthesis; chorismate from D-erythrose 4-phosphate and phosphoenolpyruvate: step 3/7. Involved in the third step of the chorismate pathway, which leads to the biosynthesis of aromatic amino acids. Catalyzes the cis-dehydration of 3-dehydroquinate (DHQ) and introduces the first double bond of the aromatic ring to yield 3-dehydroshikimate. In Escherichia coli (strain 55989 / EAEC), this protein is 3-dehydroquinate dehydratase.